The sequence spans 533 residues: Bifunctional aspartate aminotransferase and L-aspartate beta-decarboxylase (533 aa).

Positions 115 and 256 each coordinate L-aspartate. Lysine 315 is subject to N6-(pyridoxal phosphate)lysine. Residue arginine 497 participates in L-aspartate binding.

It belongs to the class-I pyridoxal-phosphate-dependent aminotransferase family. Homododecamer. It depends on pyridoxal 5'-phosphate as a cofactor.

The enzyme catalyses L-aspartate + H(+) = L-alanine + CO2. The catalysed reaction is L-aspartate + 2-oxoglutarate = oxaloacetate + L-glutamate. Its function is as follows. Bifunctional enzyme that has both L-aspartate decarboxylase and transaminase activity. This chain is Bifunctional aspartate aminotransferase and L-aspartate beta-decarboxylase, found in Comamonas testosteroni (Pseudomonas testosteroni).